Reading from the N-terminus, the 535-residue chain is Lecithin-cholesterol acyltransferase-like 4 (535 aa).

The residue at position 2 (Ser-2) is an N-acetylserine. The Acyl-ester intermediate role is filled by Ser-182. Catalysis depends on charge relay system residues Asp-391 and His-416. Polar residues predominate over residues 488-505 (STVNSISVSQPGDDQNPQ). A disordered region spans residues 488–507 (STVNSISVSQPGDDQNPQAE).

It belongs to the AB hydrolase superfamily. Lipase family.

The chain is Lecithin-cholesterol acyltransferase-like 4 (LCAT4) from Arabidopsis thaliana (Mouse-ear cress).